Reading from the N-terminus, the 311-residue chain is Meteorin-like protein (311 aa).

An N-terminal signal peptide occupies residues 1–45 (MRGAVWAARRRAGQQWPRSPGPGPGPPPPPPLLLLLLLLLGGASA). A disulfide bridge links cysteine 52 with cysteine 75. Asparagine 103 is a glycosylation site (N-linked (GlcNAc...) asparagine). 4 disulfides stabilise this stretch: cysteine 107–cysteine 143, cysteine 188–cysteine 260, cysteine 191–cysteine 284, and cysteine 201–cysteine 306.

The protein belongs to the meteorin family. N-glycosylated. Highly expressed in subcutaneous adipose tissue.

It localises to the secreted. In terms of biological role, hormone induced following exercise or cold exposure that promotes energy expenditure. Induced either in the skeletal muscle after exercise or in adipose tissue following cold exposure and is present in the circulation. Able to stimulate energy expenditure associated with the browning of the white fat depots and improves glucose tolerance. Does not promote an increase in a thermogenic gene program via direct action on adipocytes, but acts by stimulating several immune cell subtypes to enter the adipose tissue and activate their prothermogenic actions. Stimulates an eosinophil-dependent increase in IL4 expression and promotes alternative activation of adipose tissue macrophages, which are required for the increased expression of the thermogenic and anti-inflammatory gene programs in fat. Required for some cold-induced thermogenic responses, suggesting a role in metabolic adaptations to cold temperatures. This is Meteorin-like protein (Metrnl) from Mus musculus (Mouse).